Here is a 456-residue protein sequence, read N- to C-terminus: Protein disulfide-isomerase TMX3 (456 aa).

An N-terminal signal peptide occupies residues 1–29 (MANAVGRRSWAALRLCAAVILLDLAVCKG). Positions 30–131 (FVEDLNESFK…KDDIIEFAHR (102 aa)) constitute a Thioredoxin domain. The Lumenal portion of the chain corresponds to 30–378 (FVEDLNESFK…TIVSIFKSSP (349 aa)). Residue asparagine 35 is glycosylated (N-linked (GlcNAc...) asparagine). Catalysis depends on nucleophile residues cysteine 56 and cysteine 59. An intrachain disulfide couples cysteine 56 to cysteine 59. N-linked (GlcNAc...) asparagine glycans are attached at residues asparagine 261 and asparagine 316. Residues 379–399 (LMGCFLFGLPLGVISIMCYGI) form a helical membrane-spanning segment. The Cytoplasmic segment spans residues 400–456 (YTADTDGGYIEERYEVSKSEMENQEQIEESKEQESSSGGSLAPTVQEPKDVLEKKKD). Positions 416–456 (SKSEMENQEQIEESKEQESSSGGSLAPTVQEPKDVLEKKKD) are disordered. Residues 446 to 456 (EPKDVLEKKKD) show a composition bias toward basic and acidic residues. Positions 453–456 (KKKD) match the Di-lysine motif motif.

This sequence belongs to the protein disulfide isomerase family.

The protein resides in the endoplasmic reticulum membrane. It carries out the reaction Catalyzes the rearrangement of -S-S- bonds in proteins.. In terms of biological role, probable disulfide isomerase, which participates in the folding of proteins containing disulfide bonds. May act as a dithiol oxidase. Acts as a regulator of endoplasmic reticulum-mitochondria contact sites via its ability to regulate redox signals. In Mus musculus (Mouse), this protein is Protein disulfide-isomerase TMX3 (Tmx3).